A 353-amino-acid chain; its full sequence is Photosystem II protein D1 (353 aa).

T2 bears the N-acetylthreonine mark. Position 2 is a phosphothreonine (T2). A run of 3 helical transmembrane segments spans residues 29-46, 118-133, and 142-156; these read YIGWFGVLMIPTLLTATS, HFLLGVACYMGREWEL, and WIAVAYSAPVAAATA. Position 118 (H118) interacts with chlorophyll a. A pheophytin a-binding site is contributed by Y126. Residues D170 and E189 each coordinate [CaMn4O5] cluster. A helical transmembrane segment spans residues 197-218; the sequence is FHMLGVAGVFGGSLFSAMHGSL. Position 198 (H198) interacts with chlorophyll a. A quinone contacts are provided by residues H215 and 264-265; that span reads SF. H215 contributes to the Fe cation binding site. H272 contributes to the Fe cation binding site. The helical transmembrane segment at 274–288 threads the bilayer; that stretch reads FLAAWPVVGIWFTAL. Residues H332, E333, D342, and A344 each contribute to the [CaMn4O5] cluster site. Positions 345 to 353 are excised as a propeptide; that stretch reads SIEAPLVNG.

Belongs to the reaction center PufL/M/PsbA/D family. PSII is composed of 1 copy each of membrane proteins PsbA, PsbB, PsbC, PsbD, PsbE, PsbF, PsbH, PsbI, PsbJ, PsbK, PsbL, PsbM, PsbT, PsbX, PsbY, PsbZ, Psb30/Ycf12, at least 3 peripheral proteins of the oxygen-evolving complex and a large number of cofactors. It forms dimeric complexes. The D1/D2 heterodimer binds P680, chlorophylls that are the primary electron donor of PSII, and subsequent electron acceptors. It shares a non-heme iron and each subunit binds pheophytin, quinone, additional chlorophylls, carotenoids and lipids. D1 provides most of the ligands for the Mn4-Ca-O5 cluster of the oxygen-evolving complex (OEC). There is also a Cl(-1) ion associated with D1 and D2, which is required for oxygen evolution. The PSII complex binds additional chlorophylls, carotenoids and specific lipids. serves as cofactor. In terms of processing, tyr-161 forms a radical intermediate that is referred to as redox-active TyrZ, YZ or Y-Z. Post-translationally, C-terminally processed by CTPA; processing is essential to allow assembly of the oxygen-evolving complex and thus photosynthetic growth.

The protein resides in the plastid. The protein localises to the chloroplast thylakoid membrane. The enzyme catalyses 2 a plastoquinone + 4 hnu + 2 H2O = 2 a plastoquinol + O2. Photosystem II (PSII) is a light-driven water:plastoquinone oxidoreductase that uses light energy to abstract electrons from H(2)O, generating O(2) and a proton gradient subsequently used for ATP formation. It consists of a core antenna complex that captures photons, and an electron transfer chain that converts photonic excitation into a charge separation. The D1/D2 (PsbA/PsbD) reaction center heterodimer binds P680, the primary electron donor of PSII as well as several subsequent electron acceptors. In Psilotum nudum (Whisk fern), this protein is Photosystem II protein D1.